The primary structure comprises 361 residues: UDP-N-acetylglucosamine--N-acetylmuramyl-(pentapeptide) pyrophosphoryl-undecaprenol N-acetylglucosamine transferase (361 aa).

UDP-N-acetyl-alpha-D-glucosamine-binding positions include 12-14 (TGG), asparagine 124, arginine 163, serine 189, isoleucine 241, 260-265 (ALTVSE), and glutamine 286.

It belongs to the glycosyltransferase 28 family. MurG subfamily.

Its subcellular location is the cell inner membrane. It carries out the reaction di-trans,octa-cis-undecaprenyl diphospho-N-acetyl-alpha-D-muramoyl-L-alanyl-D-glutamyl-meso-2,6-diaminopimeloyl-D-alanyl-D-alanine + UDP-N-acetyl-alpha-D-glucosamine = di-trans,octa-cis-undecaprenyl diphospho-[N-acetyl-alpha-D-glucosaminyl-(1-&gt;4)]-N-acetyl-alpha-D-muramoyl-L-alanyl-D-glutamyl-meso-2,6-diaminopimeloyl-D-alanyl-D-alanine + UDP + H(+). The protein operates within cell wall biogenesis; peptidoglycan biosynthesis. Functionally, cell wall formation. Catalyzes the transfer of a GlcNAc subunit on undecaprenyl-pyrophosphoryl-MurNAc-pentapeptide (lipid intermediate I) to form undecaprenyl-pyrophosphoryl-MurNAc-(pentapeptide)GlcNAc (lipid intermediate II). The protein is UDP-N-acetylglucosamine--N-acetylmuramyl-(pentapeptide) pyrophosphoryl-undecaprenol N-acetylglucosamine transferase of Aeromonas hydrophila subsp. hydrophila (strain ATCC 7966 / DSM 30187 / BCRC 13018 / CCUG 14551 / JCM 1027 / KCTC 2358 / NCIMB 9240 / NCTC 8049).